The sequence spans 750 residues: Neprilysin (750 aa).

Positions 1-14 (MGKSESQMDITDIN) are enriched in polar residues. Residues 1-20 (MGKSESQMDITDINTPKPKK) are disordered. Gly2 carries N-myristoyl glycine lipidation. The Cytoplasmic segment spans residues 2–28 (GKSESQMDITDINTPKPKKKQRWTPLE). Phosphoserine occurs at positions 4 and 6. The short motif at 16–23 (PKPKKKQR) is the Stop-transfer sequence element. A helical; Signal-anchor for type II membrane protein transmembrane segment spans residues 29-51 (ISLSVLVLLLTIIAVTMIALYAT). Over 52–750 (YDDGICKSSD…MNPEKKCRVW (699 aa)) the chain is Extracellular. A Peptidase M13 domain is found at 56–750 (ICKSSDCIKS…MNPEKKCRVW (695 aa)). Disulfide bonds link Cys57–Cys62, Cys80–Cys735, Cys88–Cys695, Cys143–Cys411, Cys234–Cys242, and Cys621–Cys747. An a peptide-binding site is contributed by Arg103. Asn145 is a glycosylation site (N-linked (GlcNAc...) asparagine). Residues Asn285, Asn311, Asn325, and Asn335 are each glycosylated (N-linked (GlcNAc...) asparagine). His584 serves as a coordination point for Zn(2+). Glu585 is a catalytic residue. His588 provides a ligand contact to Zn(2+). Asn628 is a glycosylation site (N-linked (GlcNAc...) asparagine). Zn(2+) is bound at residue Glu647. Asp651 functions as the Proton donor in the catalytic mechanism.

This sequence belongs to the peptidase M13 family. It depends on Zn(2+) as a cofactor. Myristoylation is a determinant of membrane targeting. Post-translationally, glycosylation at Asn-628 is necessary both for surface expression and neutral endopeptidase activity.

The protein resides in the cell membrane. The catalysed reaction is Preferential cleavage of polypeptides between hydrophobic residues, particularly with Phe or Tyr at P1'.. The enzyme catalyses substance P + H2O = substance P(1-9) + L-Leu-L-Met-NH2. It catalyses the reaction substance P + H2O = substance P(1-7) + L-Phe-Gly-L-Leu-L-Met-NH2. It carries out the reaction neurotensin + H2O = neurotensin(1-11) + L-isoleucyl-L-leucine. The catalysed reaction is neurotensin + H2O = neurotensin(1-10) + L-tyrosyl-L-isoleucyl-L-leucine. Thermolysin-like specificity, but is almost confined on acting on polypeptides of up to 30 amino acids. Biologically important in the destruction of opioid peptides such as Met- and Leu-enkephalins by cleavage of a Gly-Phe bond. Catalyzes cleavage of bradykinin, substance P and neurotensin peptides. Able to cleave angiotensin-1, angiotensin-2 and angiotensin 1-9. Involved in the degradation of atrial natriuretic factor (ANF) and brain natriuretic factor (BNP(1-32)). Displays UV-inducible elastase activity toward skin preelastic and elastic fibers. In Pongo abelii (Sumatran orangutan), this protein is Neprilysin (MME).